A 249-amino-acid polypeptide reads, in one-letter code: Coproheme decarboxylase (249 aa).

Residues arginine 131, 145–149 (YPMDK), histidine 172, and glutamine 185 each bind Fe-coproporphyrin III. Residue tyrosine 145 is part of the active site.

This sequence belongs to the ChdC family. Type 1 subfamily. The cofactor is Fe-coproporphyrin III.

It carries out the reaction Fe-coproporphyrin III + 2 H2O2 + 2 H(+) = heme b + 2 CO2 + 4 H2O. It catalyses the reaction Fe-coproporphyrin III + H2O2 + H(+) = harderoheme III + CO2 + 2 H2O. The enzyme catalyses harderoheme III + H2O2 + H(+) = heme b + CO2 + 2 H2O. The protein operates within porphyrin-containing compound metabolism; protoheme biosynthesis. Its function is as follows. Involved in coproporphyrin-dependent heme b biosynthesis. Catalyzes the decarboxylation of Fe-coproporphyrin III (coproheme) to heme b (protoheme IX), the last step of the pathway. The reaction occurs in a stepwise manner with a three-propionate intermediate. This is Coproheme decarboxylase from Staphylococcus saprophyticus subsp. saprophyticus (strain ATCC 15305 / DSM 20229 / NCIMB 8711 / NCTC 7292 / S-41).